The sequence spans 104 residues: Large ribosomal subunit protein uL24 (104 aa).

Belongs to the universal ribosomal protein uL24 family. As to quaternary structure, part of the 50S ribosomal subunit.

One of two assembly initiator proteins, it binds directly to the 5'-end of the 23S rRNA, where it nucleates assembly of the 50S subunit. Functionally, one of the proteins that surrounds the polypeptide exit tunnel on the outside of the subunit. This chain is Large ribosomal subunit protein uL24, found in Saccharopolyspora erythraea (strain ATCC 11635 / DSM 40517 / JCM 4748 / NBRC 13426 / NCIMB 8594 / NRRL 2338).